Reading from the N-terminus, the 161-residue chain is Nucleotide-binding protein xcc-b100_3818 (161 aa).

The protein belongs to the YajQ family.

Nucleotide-binding protein. The sequence is that of Nucleotide-binding protein xcc-b100_3818 from Xanthomonas campestris pv. campestris (strain B100).